Here is a 333-residue protein sequence, read N- to C-terminus: DNA-directed RNA polymerase subunit alpha (333 aa).

Positions 1 to 239 (MSAVLDKGSL…TQARCFLNIA (239 aa)) are alpha N-terminal domain (alpha-NTD). The tract at residues 259–333 (DASDLLSARI…SLGMNLDSHG (75 aa)) is alpha C-terminal domain (alpha-CTD).

This sequence belongs to the RNA polymerase alpha chain family. In terms of assembly, homodimer. The RNAP catalytic core consists of 2 alpha, 1 beta, 1 beta' and 1 omega subunit. When a sigma factor is associated with the core the holoenzyme is formed, which can initiate transcription.

It catalyses the reaction RNA(n) + a ribonucleoside 5'-triphosphate = RNA(n+1) + diphosphate. Its function is as follows. DNA-dependent RNA polymerase catalyzes the transcription of DNA into RNA using the four ribonucleoside triphosphates as substrates. This chain is DNA-directed RNA polymerase subunit alpha, found in Neorickettsia sennetsu (strain ATCC VR-367 / Miyayama) (Ehrlichia sennetsu).